A 426-amino-acid chain; its full sequence is Glucose-6-phosphate isomerase (426 aa).

E276 serves as the catalytic Proton donor. Residues H297 and K413 contribute to the active site.

This sequence belongs to the GPI family.

It is found in the cytoplasm. The catalysed reaction is alpha-D-glucose 6-phosphate = beta-D-fructose 6-phosphate. Its pathway is carbohydrate biosynthesis; gluconeogenesis. It participates in carbohydrate degradation; glycolysis; D-glyceraldehyde 3-phosphate and glycerone phosphate from D-glucose: step 2/4. Functionally, catalyzes the reversible isomerization of glucose-6-phosphate to fructose-6-phosphate. The protein is Glucose-6-phosphate isomerase of Mesoplasma florum (strain ATCC 33453 / NBRC 100688 / NCTC 11704 / L1) (Acholeplasma florum).